Here is a 117-residue protein sequence, read N- to C-terminus: Large ribosomal subunit protein bL17 (117 aa).

The protein belongs to the bacterial ribosomal protein bL17 family. As to quaternary structure, part of the 50S ribosomal subunit. Contacts protein L32.

In Exiguobacterium sp. (strain ATCC BAA-1283 / AT1b), this protein is Large ribosomal subunit protein bL17.